The chain runs to 337 residues: 5-formaminoimidazole-4-carboxamide-1-(beta)-D-ribofuranosyl 5'-monophosphate synthetase (337 aa).

Residues His-9 and Ser-73 each contribute to the 5-amino-1-(5-phospho-beta-D-ribosyl)imidazole-4-carboxamide site. An ATP-grasp domain is found at 94 to 324; the sequence is KKIFEWEADQ…IGRRIAREIR (231 aa). ATP-binding positions include 124–184 and Glu-206; that span reads PEDV…VPMY. Asn-234 lines the 5-amino-1-(5-phospho-beta-D-ribosyl)imidazole-4-carboxamide pocket. Mg(2+) is bound by residues Glu-273 and Glu-286.

The protein belongs to the phosphohexose mutase family. Mg(2+) serves as cofactor. Requires Mn(2+) as cofactor.

The catalysed reaction is 5-amino-1-(5-phospho-beta-D-ribosyl)imidazole-4-carboxamide + formate + ATP = 5-formamido-1-(5-phospho-D-ribosyl)imidazole-4-carboxamide + ADP + phosphate. It functions in the pathway purine metabolism; IMP biosynthesis via de novo pathway; 5-formamido-1-(5-phospho-D-ribosyl)imidazole-4-carboxamide from 5-amino-1-(5-phospho-D-ribosyl)imidazole-4-carboxamide (formate route): step 1/1. In terms of biological role, catalyzes the ATP- and formate-dependent formylation of 5-aminoimidazole-4-carboxamide-1-beta-d-ribofuranosyl 5'-monophosphate (AICAR) to 5-formaminoimidazole-4-carboxamide-1-beta-d-ribofuranosyl 5'-monophosphate (FAICAR) in the absence of folates. This chain is 5-formaminoimidazole-4-carboxamide-1-(beta)-D-ribofuranosyl 5'-monophosphate synthetase, found in Saccharolobus solfataricus (strain ATCC 35092 / DSM 1617 / JCM 11322 / P2) (Sulfolobus solfataricus).